A 1577-amino-acid chain; its full sequence is Vacuolar protein sorting/targeting protein PEP1 (1577 aa).

A signal peptide spans 1–21 (MILLHFVYSLWALLLIPLINA). Over 22-1391 (EEFTPKVTKT…EFKEKYSVSA (1370 aa)) the chain is Lumenal. 2 BNR repeats span residues 58–68 (ISFDDGETWEK) and 101–111 (YITNDQGKSWE). Asn121 and Asn168 each carry an N-linked (GlcNAc...) asparagine glycan. BNR repeat units lie at residues 179-187 (SNDGGKSFS) and 414-423 (ISVDNGLTWT). An N-linked (GlcNAc...) asparagine glycan is attached at Asn445. BNR repeat units lie at residues 485–495 (FISRDGGLTWK), 531–541 (YYSLDQGKTWT), and 762–771 (YISHDGGQTI). N-linked (GlcNAc...) asparagine glycosylation occurs at Asn791. The BNR 8 repeat unit spans residues 859-869 (YLTNDGGETFT). Asn1008 is a glycosylation site (N-linked (GlcNAc...) asparagine). BNR repeat units follow at residues 1141 to 1150 (FFTTDGGETW) and 1183 to 1192 (YSTDFGKTWK). N-linked (GlcNAc...) asparagine glycosylation is present at Asn1301. A helical membrane pass occupies residues 1392–1412 (GPFAFIFISILLIIFFAAWFV). Over 1413 to 1577 (YDRGIRRNGG…DSTAPSNENQ (165 aa)) the chain is Cytoplasmic. Residues 1531–1577 (DDVPTLEEEHTSYTDQPTTTDVPDALPEGNEENIDRPDSTAPSNENQ) form a disordered region.

The protein belongs to the VPS10-related sortilin family.

The protein resides in the golgi apparatus. It is found in the trans-Golgi network membrane. It localises to the prevacuolar compartment membrane. In terms of biological role, functions as a sorting receptor in the Golgi compartment required for the intracellular sorting and delivery of soluble vacuolar proteins, like carboxypeptidase Y (CPY) and proteinase A. Executes multiple rounds of sorting by cycling between the late Golgi and a prevacuolar endosome-like compartment. Binds the Golgi-modified P2 form of CPY, and this interaction is dependent on the presence of an intact CPY vacuolar protein sorting signal. This chain is Vacuolar protein sorting/targeting protein PEP1 (PEP1), found in Saccharomyces cerevisiae (strain JAY291) (Baker's yeast).